We begin with the raw amino-acid sequence, 377 residues long: 23S rRNA (uracil(747)-C(5))-methyltransferase RlmC (377 aa).

The [4Fe-4S] cluster site is built by Cys-3, Cys-11, Cys-14, and Cys-87. S-adenosyl-L-methionine-binding residues include Gln-212, Phe-241, Glu-262, and Asn-307. Cys-334 functions as the Nucleophile in the catalytic mechanism.

The protein belongs to the class I-like SAM-binding methyltransferase superfamily. RNA M5U methyltransferase family. RlmC subfamily.

The catalysed reaction is uridine(747) in 23S rRNA + S-adenosyl-L-methionine = 5-methyluridine(747) in 23S rRNA + S-adenosyl-L-homocysteine + H(+). Functionally, catalyzes the formation of 5-methyl-uridine at position 747 (m5U747) in 23S rRNA. This is 23S rRNA (uracil(747)-C(5))-methyltransferase RlmC from Proteus mirabilis (strain HI4320).